A 537-amino-acid polypeptide reads, in one-letter code: Spore coat protein SP70 (537 aa).

Positions 1–20 (MRILKLAALSCLLFIAPSLS) are cleaved as a signal peptide. The 120-residue stretch at 21–140 (INCDGLSKDQ…CQIPATGGGP (120 aa)) folds into the DSCP-N domain. Asn97 is a glycosylation site (N-linked (GlcNAc...) asparagine). Positions 157-179 (SCDKVNCPNGYICTIVNQLAVCV) constitute a Follistatin-like 1 domain. The segment at 183–246 (SSSSSSSSTT…GSHTTTGGST (64 aa)) is disordered. Follistatin-like domains are found at residues 250-272 (TCGN…AVCV), 278-296 (SCAN…GECI), 358-380 (TCKT…PTCV), and 389-415 (TCKD…EECC).

Post-translationally, phosphorylated and fucosylated.

This chain is Spore coat protein SP70 (cotB), found in Dictyostelium discoideum (Social amoeba).